The following is a 226-amino-acid chain: E3 ubiquitin-protein ligase RNF186 (226 aa).

The RING-type zinc finger occupies 39–85 (CLVCREPYNCARSPKLLSCQHTFCAVCLKLLLYVQEDTWSIPCPLCR). 2 helical membrane passes run 157–177 (HLLL…PGVI) and 179–199 (WVLA…CCHP).

Interacts with BNIP1. In terms of processing, polyubiquitinated. 'Lys-29'-linked autoubiquitination leads to proteasomal degradation.

Its subcellular location is the endoplasmic reticulum membrane. The enzyme catalyses S-ubiquitinyl-[E2 ubiquitin-conjugating enzyme]-L-cysteine + [acceptor protein]-L-lysine = [E2 ubiquitin-conjugating enzyme]-L-cysteine + N(6)-ubiquitinyl-[acceptor protein]-L-lysine.. Its pathway is protein modification; protein ubiquitination. Functionally, E3 ubiquitin protein ligase that is part of an apoptotic signaling pathway activated by endoplasmic reticulum stress. Stimulates the expression of proteins specific of the unfolded protein response (UPR), ubiquitinates BNIP1 and regulates its localization to the mitochondrion and induces calcium release from the endoplasmic reticulum that ultimately leads to cell apoptosis. Plays a role in the maintenance of intestinal homeostasis and clearance of enteric pathogens. Upon NOD2 stimulation, ubiquitinates the ER stress sensor activating transcription factor 6/ATF6 and promotes the unfolded protein response UPR. Participates in basal level of autophagy maintenance by regulating the ubiquitination of EPHB2. Upon stimulation by ligand EFNB1, ubiquitinates EPHB2 and further recruits MAP1LC3B for autophagy induction. Controls nutrient sensing by ubiquitinating Sestrin-2/SESN2, which is an intracellular sensor of cytosolic leucine and inhibitor of mTORC1 activity. The polypeptide is E3 ubiquitin-protein ligase RNF186 (Mus musculus (Mouse)).